A 108-amino-acid polypeptide reads, in one-letter code: Large ribosomal subunit protein uL23 (108 aa).

The protein belongs to the universal ribosomal protein uL23 family. Part of the 50S ribosomal subunit. Contacts protein L29, and trigger factor when it is bound to the ribosome.

Its function is as follows. One of the early assembly proteins it binds 23S rRNA. One of the proteins that surrounds the polypeptide exit tunnel on the outside of the ribosome. Forms the main docking site for trigger factor binding to the ribosome. This chain is Large ribosomal subunit protein uL23, found in Albidiferax ferrireducens (strain ATCC BAA-621 / DSM 15236 / T118) (Rhodoferax ferrireducens).